The primary structure comprises 105 residues: Heat shock protein HspQ (105 aa).

Belongs to the HspQ family.

The protein localises to the cytoplasm. Functionally, involved in the degradation of certain denaturated proteins, including DnaA, during heat shock stress. The sequence is that of Heat shock protein HspQ from Yersinia enterocolitica serotype O:8 / biotype 1B (strain NCTC 13174 / 8081).